Consider the following 327-residue polypeptide: cAMP-dependent protein kinase regulatory subunit (327 aa).

The interval Met1–Ile47 is disordered. A dimerization and phosphorylation region spans residues Met1–Ile65. Positions Arg27–Ile31 match the Pseudophosphorylation motif motif. Ser32 carries the post-translational modification Phosphoserine. 3',5'-cyclic AMP is bound by residues Met66–Ser188, Glu136, Arg145, Ile189–Ser327, Glu262, and Arg271.

The protein belongs to the cAMP-dependent kinase regulatory chain family. In Dictyostelium the holoenzyme is a dimer composed of a regulatory (R) and a catalytic (C) subunit. In the presence of cAMP it dissociates into the active C subunit and an R monomer. In other eukaryotes the holoenzyme is a tetramer composed of 2 regulatory (R) and 2 catalytic (C) subunits. In the presence of cAMP it dissociates into active monomeric C subunits and an R dimer. In terms of processing, the pseudophosphorylation site binds to the substrate-binding region of the catalytic chain but is not phosphorylated. The physiological significance of phosphorylations by other kinases is unclear.

The sequence is that of cAMP-dependent protein kinase regulatory subunit (pkaR) from Dictyostelium discoideum (Social amoeba).